We begin with the raw amino-acid sequence, 205 residues long: HTH-type transcriptional repressor KstR2 (205 aa).

The HTH tetR-type domain occupies 10-70; that stretch reads ASRRDELLQL…EVLRDFLDWL (61 aa). A DNA-binding region (H-T-H motif) is located at residues 33–52; that stretch reads TVRDIADSAGILSGSLYHHF.

In terms of assembly, homodimer.

Functionally, controls the expression of a small regulon that may play a role in the utilization of cholesterol. The protein is HTH-type transcriptional repressor KstR2 (kstR2) of Mycolicibacterium smegmatis (strain ATCC 700084 / mc(2)155) (Mycobacterium smegmatis).